The following is a 311-amino-acid chain: tRNA dimethylallyltransferase (311 aa).

11-18 (GPTAVGKT) provides a ligand contact to ATP. 13 to 18 (TAVGKT) provides a ligand contact to substrate. The interval 36–39 (DSVQ) is interaction with substrate tRNA.

This sequence belongs to the IPP transferase family. As to quaternary structure, monomer. Mg(2+) serves as cofactor.

The catalysed reaction is adenosine(37) in tRNA + dimethylallyl diphosphate = N(6)-dimethylallyladenosine(37) in tRNA + diphosphate. Functionally, catalyzes the transfer of a dimethylallyl group onto the adenine at position 37 in tRNAs that read codons beginning with uridine, leading to the formation of N6-(dimethylallyl)adenosine (i(6)A). The polypeptide is tRNA dimethylallyltransferase (Exiguobacterium sp. (strain ATCC BAA-1283 / AT1b)).